The primary structure comprises 317 residues: Probable cell division protein WhiA (317 aa).

The segment at residues 275–308 is a DNA-binding region (H-T-H motif); the sequence is SLKELGEMLVPKVGKSGVNHRMRKIDELAEKLEE.

This sequence belongs to the WhiA family.

Involved in cell division and chromosome segregation. This Desulfitobacterium hafniense (strain DSM 10664 / DCB-2) protein is Probable cell division protein WhiA.